Consider the following 576-residue polypeptide: MKYFFQNKKNIHIKNETFNNRITILLSLIIITIILVLSRITFLQIIVSKKLIYKSNLRSLRTQIEFNQRGNITDRLGYPLAINIPVKNICIDPKLLFSKQTHIYPNLKWKMLSTVLSIPLSEIFYRIKYSKNNHFIYLAHKVNPEISEYISQLHIPGIYILDDFKRFYPFGKLTSQLIGFTNIDNEGIEGVEKSFNKLLMGKPGKKQIITDRYGRIIEQHNLVNKIQSHDIILSIDCSFQKFIYHILNQAVMSNKAKFGVAILVNIPTGEILSMVNTPSYDPNNSSELFKNNPLIRNKAITDIFELGSTVKPMIIMKALEKKIITPETVINTSSLVVNKHIIHDVSYHHALTASDILKKSSNTGVSRLALSIPISELIDIYSKFELGKSTNLGLIGERNGVLNTNKKHWSDLDKVTLSFGYGLMATPLQLARIYTTIGRYGLSKPLSIIVKNDTNLKNDIFSKQVFSKKIIKTVINMLEEVAKPGGAGFKAAIKGYRIAVKTGTAKKINSKGKYDNKYVSYIVGFAPVSNPTFCLMIMINEPKSNKYYGGEIAAPIFKTIMQKILKIKNIKPDAYL.

The chain crosses the membrane as a helical span at residues 22-42 (ITILLSLIIITIILVLSRITF). S308 acts as the Acyl-ester intermediate in catalysis.

Belongs to the transpeptidase family. FtsI subfamily.

Its subcellular location is the cell inner membrane. It carries out the reaction Preferential cleavage: (Ac)2-L-Lys-D-Ala-|-D-Ala. Also transpeptidation of peptidyl-alanyl moieties that are N-acyl substituents of D-alanine.. It participates in cell wall biogenesis; peptidoglycan biosynthesis. Catalyzes cross-linking of the peptidoglycan cell wall at the division septum. The polypeptide is Peptidoglycan D,D-transpeptidase FtsI (Buchnera aphidicola subsp. Baizongia pistaciae (strain Bp)).